A 498-amino-acid polypeptide reads, in one-letter code: Glycylpeptide N-tetradecanoyltransferase 2 (498 aa).

Positions 1–88 are disordered; the sequence is MAEDSESAAS…QPSKNPSVPM (88 aa). Positions 15-32 are enriched in acidic residues; the sequence is ELDDQDTCGIDGDNEEET. S38 carries the post-translational modification Phosphoserine. The span at 45–57 shows a compositional bias: basic residues; sequence AKKKKKKQKRKKE. The span at 61 to 86 shows a compositional bias: polar residues; sequence SGGTKSDSASDSQEIKIQQPSKNPSV. 8 residues coordinate tetradecanoyl-CoA: H117, W122, L250, V252, S258, R260, V261, and A262.

It belongs to the NMT family.

The protein localises to the cytoplasm. Its subcellular location is the membrane. It carries out the reaction N-terminal glycyl-[protein] + tetradecanoyl-CoA = N-tetradecanoylglycyl-[protein] + CoA + H(+). The enzyme catalyses N-terminal glycyl-L-lysyl-[protein] + tetradecanoyl-CoA = N-terminal glycyl-(N(6)-tetradecanoyl)-L-lysyl-[protein] + CoA + H(+). Adds a myristoyl group to the N-terminal glycine residue of certain cellular and viral proteins. Also able to mediate N-terminal lysine myristoylation of proteins: catalyzes myristoylation of ARF6 on both 'Gly-2' and 'Lys-3'. Lysine myristoylation is required to maintain ARF6 on membranes during the GTPase cycle. This Homo sapiens (Human) protein is Glycylpeptide N-tetradecanoyltransferase 2.